Reading from the N-terminus, the 168-residue chain is Monothiol glutaredoxin-S7, chloroplastic (168 aa).

The N-terminal 54 residues, 1-54 (MAATAAASVAAISPLPGASLPRPVSARVPLLPRASPPTWRLSVGSARARSTRCL), are a transit peptide targeting the chloroplast. Residues 67 to 168 (RATLDKVVGS…QETLEKAMLS (102 aa)) form the Glutaredoxin domain. Lys-84 is a binding site for glutathione. Cys-92 is a [2Fe-2S] cluster binding site. Residues Arg-121, Phe-133, and 146–147 (CD) each bind glutathione.

It belongs to the glutaredoxin family. CGFS subfamily.

The protein resides in the plastid. It localises to the chloroplast. Its function is as follows. May only reduce GSH-thiol disulfides, but not protein disulfides. The chain is Monothiol glutaredoxin-S7, chloroplastic (GRXS7) from Oryza sativa subsp. japonica (Rice).